Reading from the N-terminus, the 89-residue chain is Elongation factor 1-beta (89 aa).

It belongs to the EF-1-beta/EF-1-delta family.

In terms of biological role, promotes the exchange of GDP for GTP in EF-1-alpha/GDP, thus allowing the regeneration of EF-1-alpha/GTP that could then be used to form the ternary complex EF-1-alpha/GTP/AAtRNA. The chain is Elongation factor 1-beta from Methanosarcina acetivorans (strain ATCC 35395 / DSM 2834 / JCM 12185 / C2A).